Here is a 231-residue protein sequence, read N- to C-terminus: DNA mismatch repair protein MutH (231 aa).

This sequence belongs to the MutH family.

It localises to the cytoplasm. In terms of biological role, sequence-specific endonuclease that cleaves unmethylated GATC sequences. It is involved in DNA mismatch repair. The chain is DNA mismatch repair protein MutH from Salmonella paratyphi A (strain ATCC 9150 / SARB42).